A 421-amino-acid polypeptide reads, in one-letter code: Mitochondrial tRNA-specific 2-thiouridylase 1 (421 aa).

ATP contacts are provided by residues 10–17 and Met-36; that span reads ALSGGVDS. Positions 96 to 98 are interaction with target base in tRNA; sequence NPD. Catalysis depends on Cys-101, which acts as the Nucleophile. Cys-101 and Cys-222 are oxidised to a cystine. Gly-126 provides a ligand contact to ATP. The interval 171–173 is interaction with tRNA; the sequence is KDQ. Catalysis depends on Cys-222, which acts as the Cysteine persulfide intermediate. Residues 334 to 335 form an interaction with tRNA region; the sequence is RH. A disordered region spans residues 395 to 421; the sequence is KGQRRAGMATESPSDSPEDGPGLSPLL.

The protein belongs to the MnmA/TRMU family. As to expression, ubiquitous. Abundantly expressed in tissues with high metabolic rates including heart, liver, kidney, and brain.

The protein resides in the mitochondrion. The enzyme catalyses 5-taurinomethyluridine(34) in tRNA + S-sulfanyl-L-cysteinyl-[protein] + AH2 + ATP = 5-taurinomethyl-2-thiouridine(34) in tRNA + L-cysteinyl-[protein] + A + AMP + diphosphate + H(+). Functionally, catalyzes the 2-thiolation of uridine at the wobble position (U34) of mitochondrial tRNA(Lys), tRNA(Glu) and tRNA(Gln). Required for the formation of 5-taurinomethyl-2-thiouridine (tm5s2U) of mitochondrial tRNA(Lys), tRNA(Glu), and tRNA(Gln) at the wobble position. ATP is required to activate the C2 atom of the wobble base. This chain is Mitochondrial tRNA-specific 2-thiouridylase 1 (TRMU), found in Homo sapiens (Human).